Here is a 452-residue protein sequence, read N- to C-terminus: Ribosomal protein uS12 methylthiotransferase RimO (452 aa).

One can recognise an MTTase N-terminal domain in the interval 5–116; it reads PTIAFSHLGC…IVDVLQRTES (112 aa). The [4Fe-4S] cluster site is built by cysteine 14, cysteine 50, cysteine 79, cysteine 154, cysteine 158, and cysteine 161. The Radical SAM core domain maps to 140–369; sequence TTTSAVAYLR…MATQQPIAER (230 aa). Positions 372–438 constitute a TRAM domain; sequence RAQIGRLVDV…IYDLHGEVAS (67 aa).

This sequence belongs to the methylthiotransferase family. RimO subfamily. Requires [4Fe-4S] cluster as cofactor.

It localises to the cytoplasm. It catalyses the reaction L-aspartate(89)-[ribosomal protein uS12]-hydrogen + (sulfur carrier)-SH + AH2 + 2 S-adenosyl-L-methionine = 3-methylsulfanyl-L-aspartate(89)-[ribosomal protein uS12]-hydrogen + (sulfur carrier)-H + 5'-deoxyadenosine + L-methionine + A + S-adenosyl-L-homocysteine + 2 H(+). Its function is as follows. Catalyzes the methylthiolation of an aspartic acid residue of ribosomal protein uS12. The chain is Ribosomal protein uS12 methylthiotransferase RimO from Synechococcus elongatus (strain ATCC 33912 / PCC 7942 / FACHB-805) (Anacystis nidulans R2).